A 348-amino-acid polypeptide reads, in one-letter code: Holliday junction branch migration complex subunit RuvB (348 aa).

The tract at residues 4 to 198 (TTDYGASNTG…FGFTAHLDFY (195 aa)) is large ATPase domain (RuvB-L). ATP contacts are provided by residues leucine 37, arginine 38, glycine 79, lysine 82, threonine 83, threonine 84, 145–147 (EDF), arginine 188, tyrosine 198, and arginine 235. Threonine 83 is a binding site for Mg(2+). Residues 199 to 269 (PHEELEKLIE…DVKEALALYQ (71 aa)) form a small ATPAse domain (RuvB-S) region. The interval 272 to 348 (SEGLDRLDIA…DIIFGNYAQR (77 aa)) is head domain (RuvB-H). Residues arginine 327 and arginine 332 each contribute to the DNA site.

The protein belongs to the RuvB family. In terms of assembly, homohexamer. Forms an RuvA(8)-RuvB(12)-Holliday junction (HJ) complex. HJ DNA is sandwiched between 2 RuvA tetramers; dsDNA enters through RuvA and exits via RuvB. An RuvB hexamer assembles on each DNA strand where it exits the tetramer. Each RuvB hexamer is contacted by two RuvA subunits (via domain III) on 2 adjacent RuvB subunits; this complex drives branch migration. In the full resolvosome a probable DNA-RuvA(4)-RuvB(12)-RuvC(2) complex forms which resolves the HJ.

The protein localises to the cytoplasm. It catalyses the reaction ATP + H2O = ADP + phosphate + H(+). In terms of biological role, the RuvA-RuvB-RuvC complex processes Holliday junction (HJ) DNA during genetic recombination and DNA repair, while the RuvA-RuvB complex plays an important role in the rescue of blocked DNA replication forks via replication fork reversal (RFR). RuvA specifically binds to HJ cruciform DNA, conferring on it an open structure. The RuvB hexamer acts as an ATP-dependent pump, pulling dsDNA into and through the RuvAB complex. RuvB forms 2 homohexamers on either side of HJ DNA bound by 1 or 2 RuvA tetramers; 4 subunits per hexamer contact DNA at a time. Coordinated motions by a converter formed by DNA-disengaged RuvB subunits stimulates ATP hydrolysis and nucleotide exchange. Immobilization of the converter enables RuvB to convert the ATP-contained energy into a lever motion, pulling 2 nucleotides of DNA out of the RuvA tetramer per ATP hydrolyzed, thus driving DNA branch migration. The RuvB motors rotate together with the DNA substrate, which together with the progressing nucleotide cycle form the mechanistic basis for DNA recombination by continuous HJ branch migration. Branch migration allows RuvC to scan DNA until it finds its consensus sequence, where it cleaves and resolves cruciform DNA. This chain is Holliday junction branch migration complex subunit RuvB, found in Bifidobacterium longum (strain DJO10A).